We begin with the raw amino-acid sequence, 420 residues long: Protein Rv2184c (420 aa).

This sequence belongs to the arsA ATPase family.

The chain is Protein Rv2184c from Mycobacterium tuberculosis (strain ATCC 25618 / H37Rv).